The following is a 377-amino-acid chain: Homoserine O-succinyltransferase (377 aa).

The 309-residue stretch at 50–358 (NAVLICHALS…PSSYGHDSFL (309 aa)) folds into the AB hydrolase-1 domain. The active-site Nucleophile is serine 156. Position 226 (arginine 226) interacts with substrate. Catalysis depends on residues aspartate 321 and histidine 354. A substrate-binding site is contributed by aspartate 355.

It belongs to the AB hydrolase superfamily. MetX family. As to quaternary structure, homodimer.

Its subcellular location is the cytoplasm. The catalysed reaction is L-homoserine + succinyl-CoA = O-succinyl-L-homoserine + CoA. Its pathway is amino-acid biosynthesis; L-methionine biosynthesis via de novo pathway; O-succinyl-L-homoserine from L-homoserine: step 1/1. Its function is as follows. Transfers a succinyl group from succinyl-CoA to L-homoserine, forming succinyl-L-homoserine. The polypeptide is Homoserine O-succinyltransferase (Nitrosomonas europaea (strain ATCC 19718 / CIP 103999 / KCTC 2705 / NBRC 14298)).